The sequence spans 368 residues: DNA-dependent metalloprotease dvc-1 (368 aa).

Positions 21–190 (HALFIQFDAR…QSCGGNFLKV (170 aa)) constitute a SprT-like domain. His89 is a Zn(2+) binding site. Glu90 is a catalytic residue. Zn(2+)-binding residues include His93 and His108. The disordered stretch occupies residues 187–309 (FLKVKEPEGY…PVNFTSPSSA (123 aa)). The span at 226–237 (TLDDFFKKDGKN) shows a compositional bias: basic and acidic residues. Low complexity predominate over residues 238 to 274 (SSDNSTSKSPTKPSTSLFTGSGQKLGGSSSTSSLLNS). A UBZ4-type zinc finger spans residues 344–368 (SVICPSCNTEVMENLIHGHLDYCLG). Zn(2+) contacts are provided by Cys347, Cys350, His362, and Cys366.

This sequence belongs to the Spartan family. In terms of assembly, interacts with vcp/p97 (cdc-48.1 or cdc-48.2).

The protein resides in the nucleus. Its subcellular location is the chromosome. Its function is as follows. DNA-dependent metalloendopeptidase that mediates the proteolytic cleavage of covalent DNA-protein cross-links (DPCs) during DNA synthesis, thereby playing a key role in maintaining genomic integrity. DPCs are highly toxic DNA lesions that interfere with essential chromatin transactions, such as replication and transcription, and which are induced by reactive agents, such as UV light or formaldehyde. Associates with the DNA replication machinery and specifically removes DPCs during DNA synthesis. Regulator of UV-induced DNA damage response: required to protect genome stability during DNA replication, possibly via recruitment of vcp/p97 (cdc-48.1 or cdc-48.2) recruitment. In Caenorhabditis elegans, this protein is DNA-dependent metalloprotease dvc-1.